We begin with the raw amino-acid sequence, 211 residues long: NADH-quinone oxidoreductase subunit I (211 aa).

The tract at residues 1–27 is disordered; it reads MANTDRPALPHKRAVPPSRADSGPRRR. 4Fe-4S ferredoxin-type domains lie at 71–101 and 117–146; these read LNRY…VEGA and RVYQ…MTYD. Residues C81, C84, C87, C91, C126, C129, C132, and C136 each contribute to the [4Fe-4S] cluster site.

The protein belongs to the complex I 23 kDa subunit family. NDH-1 is composed of 14 different subunits. Subunits NuoA, H, J, K, L, M, N constitute the membrane sector of the complex. [4Fe-4S] cluster is required as a cofactor.

The protein resides in the cell membrane. It catalyses the reaction a quinone + NADH + 5 H(+)(in) = a quinol + NAD(+) + 4 H(+)(out). Its function is as follows. NDH-1 shuttles electrons from NADH, via FMN and iron-sulfur (Fe-S) centers, to quinones in the respiratory chain. The immediate electron acceptor for the enzyme in this species is believed to be menaquinone. Couples the redox reaction to proton translocation (for every two electrons transferred, four hydrogen ions are translocated across the cytoplasmic membrane), and thus conserves the redox energy in a proton gradient. The protein is NADH-quinone oxidoreductase subunit I of Mycobacterium tuberculosis (strain ATCC 25177 / H37Ra).